Reading from the N-terminus, the 256-residue chain is tRNA (guanine-N(7)-)-methyltransferase (256 aa).

The segment at Thr17–Glu45 is disordered. Basic residues predominate over residues Gln26 to Ser36. Residues Gly74, Glu97–Ile98, Asn132–Ala133, and Leu152 contribute to the S-adenosyl-L-methionine site. The active site involves Asp155. Position 230–232 (Thr230–Glu232) interacts with S-adenosyl-L-methionine.

This sequence belongs to the class I-like SAM-binding methyltransferase superfamily. TrmB family.

It is found in the nucleus. It catalyses the reaction guanosine(46) in tRNA + S-adenosyl-L-methionine = N(7)-methylguanosine(46) in tRNA + S-adenosyl-L-homocysteine. The protein operates within tRNA modification; N(7)-methylguanine-tRNA biosynthesis. In terms of biological role, catalyzes the formation of N(7)-methylguanine at position 46 (m7G46) in tRNA. This Caenorhabditis elegans protein is tRNA (guanine-N(7)-)-methyltransferase.